A 158-amino-acid chain; its full sequence is MTKKPDLNDPVLRAKLAKGMGHNYYGEPAWPNDLLYISPVVILGTIACNVGLAVLEPSMIGEPADPFATPLEILPEWYFFPVFQILRTVPNKLLGVLLMVSVPTGLLTVPFLENVNKFQNPFRRPVATTVFLIGTVIALWLGIGATLPIDKSLTLGLF.

3 consecutive transmembrane segments (helical) span residues 34-54 (LLYI…GLAV), 93-113 (LLGV…PFLE), and 129-149 (TVFL…TLPI).

Belongs to the cytochrome b family. PetD subfamily. The 4 large subunits of the cytochrome b6-f complex are cytochrome b6, subunit IV (17 kDa polypeptide, petD), cytochrome f and the Rieske protein, while the 4 small subunits are petG, petL, petM and petN. The complex functions as a dimer.

Its subcellular location is the plastid. It is found in the chloroplast thylakoid membrane. In terms of biological role, component of the cytochrome b6-f complex, which mediates electron transfer between photosystem II (PSII) and photosystem I (PSI), cyclic electron flow around PSI, and state transitions. This is Cytochrome b6-f complex subunit 4 from Liriodendron tulipifera (Tuliptree).